A 351-amino-acid chain; its full sequence is Glycerol-1-phosphate dehydrogenase [NAD(P)+] (351 aa).

Residues 93 to 97 (GKVLD) and 115 to 118 (TTAS) each bind NAD(+). Residue Asp-120 participates in substrate binding. Ser-124 serves as a coordination point for NAD(+). Asp-167 is a substrate binding site. The Zn(2+) site is built by Asp-167 and His-247. Residue His-251 coordinates substrate. His-263 is a Zn(2+) binding site.

The protein belongs to the glycerol-1-phosphate dehydrogenase family. Requires Zn(2+) as cofactor.

The protein localises to the cytoplasm. The enzyme catalyses sn-glycerol 1-phosphate + NAD(+) = dihydroxyacetone phosphate + NADH + H(+). It catalyses the reaction sn-glycerol 1-phosphate + NADP(+) = dihydroxyacetone phosphate + NADPH + H(+). The protein operates within membrane lipid metabolism; glycerophospholipid metabolism. Its function is as follows. Catalyzes the NAD(P)H-dependent reduction of dihydroxyacetonephosphate (DHAP or glycerone phosphate) to glycerol 1-phosphate (G1P). The G1P thus generated is used as the glycerophosphate backbone of phospholipids in the cellular membranes of Archaea. This Archaeoglobus fulgidus (strain ATCC 49558 / DSM 4304 / JCM 9628 / NBRC 100126 / VC-16) protein is Glycerol-1-phosphate dehydrogenase [NAD(P)+].